A 525-amino-acid polypeptide reads, in one-letter code: Light-independent protochlorophyllide reductase subunit B (525 aa).

[4Fe-4S] cluster is bound at residue aspartate 36. Catalysis depends on aspartate 286, which acts as the Proton donor. 421–422 (GL) is a binding site for substrate.

Belongs to the ChlB/BchB/BchZ family. As to quaternary structure, protochlorophyllide reductase is composed of three subunits; ChlL, ChlN and ChlB. Forms a heterotetramer of two ChlB and two ChlN subunits. It depends on [4Fe-4S] cluster as a cofactor.

It carries out the reaction chlorophyllide a + oxidized 2[4Fe-4S]-[ferredoxin] + 2 ADP + 2 phosphate = protochlorophyllide a + reduced 2[4Fe-4S]-[ferredoxin] + 2 ATP + 2 H2O. The protein operates within porphyrin-containing compound metabolism; chlorophyll biosynthesis (light-independent). Component of the dark-operative protochlorophyllide reductase (DPOR) that uses Mg-ATP and reduced ferredoxin to reduce ring D of protochlorophyllide (Pchlide) to form chlorophyllide a (Chlide). This reaction is light-independent. The NB-protein (ChlN-ChlB) is the catalytic component of the complex. In Prochlorococcus marinus (strain NATL2A), this protein is Light-independent protochlorophyllide reductase subunit B.